The sequence spans 103 residues: Pyrimidine/purine nucleoside phosphorylase (103 aa).

Belongs to the nucleoside phosphorylase PpnP family.

The enzyme catalyses a purine D-ribonucleoside + phosphate = a purine nucleobase + alpha-D-ribose 1-phosphate. It catalyses the reaction adenosine + phosphate = alpha-D-ribose 1-phosphate + adenine. It carries out the reaction cytidine + phosphate = cytosine + alpha-D-ribose 1-phosphate. The catalysed reaction is guanosine + phosphate = alpha-D-ribose 1-phosphate + guanine. The enzyme catalyses inosine + phosphate = alpha-D-ribose 1-phosphate + hypoxanthine. It catalyses the reaction thymidine + phosphate = 2-deoxy-alpha-D-ribose 1-phosphate + thymine. It carries out the reaction uridine + phosphate = alpha-D-ribose 1-phosphate + uracil. The catalysed reaction is xanthosine + phosphate = alpha-D-ribose 1-phosphate + xanthine. Its function is as follows. Catalyzes the phosphorolysis of diverse nucleosides, yielding D-ribose 1-phosphate and the respective free bases. Can use uridine, adenosine, guanosine, cytidine, thymidine, inosine and xanthosine as substrates. Also catalyzes the reverse reactions. In Citrifermentans bemidjiense (strain ATCC BAA-1014 / DSM 16622 / JCM 12645 / Bem) (Geobacter bemidjiensis), this protein is Pyrimidine/purine nucleoside phosphorylase.